A 106-amino-acid polypeptide reads, in one-letter code: Small ribosomal subunit protein uS10 (106 aa).

The protein belongs to the universal ribosomal protein uS10 family. In terms of assembly, part of the 30S ribosomal subunit.

Functionally, involved in the binding of tRNA to the ribosomes. The chain is Small ribosomal subunit protein uS10 from Prochlorococcus marinus (strain MIT 9301).